A 259-amino-acid chain; its full sequence is Phosphate import ATP-binding protein PstB (259 aa).

The region spanning 11–254 (AEARNLNFYY…PQDKRTEDYI (244 aa)) is the ABC transporter domain. Residue 43–50 (GPSGCGKS) participates in ATP binding.

The protein belongs to the ABC transporter superfamily. Phosphate importer (TC 3.A.1.7) family. The complex is composed of two ATP-binding proteins (PstB), two transmembrane proteins (PstC and PstA) and a solute-binding protein (PstS).

It is found in the cell inner membrane. The catalysed reaction is phosphate(out) + ATP + H2O = ADP + 2 phosphate(in) + H(+). Part of the ABC transporter complex PstSACB involved in phosphate import. Responsible for energy coupling to the transport system. The protein is Phosphate import ATP-binding protein PstB of Dechloromonas aromatica (strain RCB).